Consider the following 507-residue polypeptide: Bifunctional purine biosynthesis protein PurH (507 aa).

Positions 1–144 (MKRALLSVSD…KNSDSVWAVV (144 aa)) constitute an MGS-like domain.

It belongs to the PurH family.

It carries out the reaction (6R)-10-formyltetrahydrofolate + 5-amino-1-(5-phospho-beta-D-ribosyl)imidazole-4-carboxamide = 5-formamido-1-(5-phospho-D-ribosyl)imidazole-4-carboxamide + (6S)-5,6,7,8-tetrahydrofolate. The enzyme catalyses IMP + H2O = 5-formamido-1-(5-phospho-D-ribosyl)imidazole-4-carboxamide. It functions in the pathway purine metabolism; IMP biosynthesis via de novo pathway; 5-formamido-1-(5-phospho-D-ribosyl)imidazole-4-carboxamide from 5-amino-1-(5-phospho-D-ribosyl)imidazole-4-carboxamide (10-formyl THF route): step 1/1. The protein operates within purine metabolism; IMP biosynthesis via de novo pathway; IMP from 5-formamido-1-(5-phospho-D-ribosyl)imidazole-4-carboxamide: step 1/1. The polypeptide is Bifunctional purine biosynthesis protein PurH (Lacticaseibacillus casei (strain BL23) (Lactobacillus casei)).